We begin with the raw amino-acid sequence, 205 residues long: ATP-dependent Clp protease proteolytic subunit (205 aa).

Ser98 (nucleophile) is an active-site residue. Residue His123 is part of the active site.

Belongs to the peptidase S14 family. Fourteen ClpP subunits assemble into 2 heptameric rings which stack back to back to give a disk-like structure with a central cavity, resembling the structure of eukaryotic proteasomes.

The protein localises to the cytoplasm. It catalyses the reaction Hydrolysis of proteins to small peptides in the presence of ATP and magnesium. alpha-casein is the usual test substrate. In the absence of ATP, only oligopeptides shorter than five residues are hydrolyzed (such as succinyl-Leu-Tyr-|-NHMec, and Leu-Tyr-Leu-|-Tyr-Trp, in which cleavage of the -Tyr-|-Leu- and -Tyr-|-Trp bonds also occurs).. In terms of biological role, cleaves peptides in various proteins in a process that requires ATP hydrolysis. Has a chymotrypsin-like activity. Plays a major role in the degradation of misfolded proteins. In Desulfosudis oleivorans (strain DSM 6200 / JCM 39069 / Hxd3) (Desulfococcus oleovorans), this protein is ATP-dependent Clp protease proteolytic subunit.